Consider the following 119-residue polypeptide: Fluoride-specific ion channel FluC (119 aa).

4 consecutive transmembrane segments (helical) span residues 5–25 (IIPLSIGAALGATARWLLNLA), 34–54 (TGNLFANWTGALLIGIFAETI), 59–79 (WKLLLITGFLGSLTTLSGFSL), and 97–117 (IFLHTAGSLLLTWLGLKIGAA). The Na(+) site is built by Gly-69 and Thr-72.

This sequence belongs to the fluoride channel Fluc/FEX (TC 1.A.43) family.

It is found in the cell inner membrane. The enzyme catalyses fluoride(in) = fluoride(out). Na(+) is not transported, but it plays an essential structural role and its presence is essential for fluoride channel function. Its function is as follows. Fluoride-specific ion channel. Important for reducing fluoride concentration in the cell, thus reducing its toxicity. This Neisseria meningitidis serogroup C / serotype 2a (strain ATCC 700532 / DSM 15464 / FAM18) protein is Fluoride-specific ion channel FluC.